Reading from the N-terminus, the 136-residue chain is Large ribosomal subunit protein bL12 (136 aa).

Belongs to the bacterial ribosomal protein bL12 family. In terms of assembly, homodimer. Part of the ribosomal stalk of the 50S ribosomal subunit. Forms a multimeric L10(L12)X complex, where L10 forms an elongated spine to which 2 to 4 L12 dimers bind in a sequential fashion. Binds GTP-bound translation factors.

Forms part of the ribosomal stalk which helps the ribosome interact with GTP-bound translation factors. Is thus essential for accurate translation. This is Large ribosomal subunit protein bL12 from Synechococcus sp. (strain JA-2-3B'a(2-13)) (Cyanobacteria bacterium Yellowstone B-Prime).